An 895-amino-acid polypeptide reads, in one-letter code: Pentatricopeptide repeat-containing protein At1g74600, chloroplastic (895 aa).

The transit peptide at 1-71 (MNCLANESLN…CNLRTTKILQ (71 aa)) directs the protein to the chloroplast. 22 PPR repeats span residues 83–113 (DVFL…IPQP), 114–148 (DVVS…GFEA), 149–183 (NEIS…GYFF), 184–214 (YEVV…SLSA), 215–249 (NVYC…FQKP), 250–280 (DSYT…VIKC), 284–314 (DVFV…IPNP), 315–349 (SVVS…GVEI), 350–384 (NNCT…GFYL), 385–415 (DSSV…LDDI), 417–451 (RQNI…GLRT), 452–483 (DEFS…GLVL), 484–514 (DLTV…IPFK), 515–549 (DNAC…GTSP), 550–584 (DEST…GIDK), 585–615 (GMDL…LPEL), 616–650 (DPVS…GFTM), 651–685 (DSFA…GLCT), 686–716 (EPSV…INGP), 717–751 (DLIA…GFKP), 752–787 (DKVT…GIEP), and 788–818 (ENRH…MHIK). A type E motif; degenerate region spans residues 824-895 (WGTLLAACKI…VQKEPGWSSV (72 aa)).

Belongs to the PPR family. PCMP-E subfamily.

The protein resides in the plastid. It is found in the chloroplast. The polypeptide is Pentatricopeptide repeat-containing protein At1g74600, chloroplastic (PCMP-E69) (Arabidopsis thaliana (Mouse-ear cress)).